Here is a 349-residue protein sequence, read N- to C-terminus: 6-phosphogluconolactonase (349 aa).

Residues 125–151 form a disordered region; the sequence is LQSPVSEAAHTGKGPHERQEKPHTHYA. The span at 138–147 shows a compositional bias: basic and acidic residues; the sequence is GPHERQEKPH.

This sequence belongs to the cycloisomerase 2 family.

It catalyses the reaction 6-phospho-D-glucono-1,5-lactone + H2O = 6-phospho-D-gluconate + H(+). It functions in the pathway carbohydrate degradation; pentose phosphate pathway; D-ribulose 5-phosphate from D-glucose 6-phosphate (oxidative stage): step 2/3. Functionally, catalyzes the hydrolysis of 6-phosphogluconolactone to 6-phosphogluconate. This is 6-phosphogluconolactonase (pgl) from Bacillus subtilis (strain 168).